The chain runs to 185 residues: Large ribosomal subunit protein uL5c (185 aa).

This sequence belongs to the universal ribosomal protein uL5 family. As to quaternary structure, part of the 50S ribosomal subunit; contacts the 5S rRNA.

It localises to the plastid. The protein resides in the chloroplast. In terms of biological role, binds 5S rRNA, forms part of the central protuberance of the 50S subunit. The chain is Large ribosomal subunit protein uL5c (rpl5) from Chlorokybus atmophyticus (Soil alga).